Here is a 197-residue protein sequence, read N- to C-terminus: A-type ATP synthase subunit E (197 aa).

This sequence belongs to the V-ATPase E subunit family. Has multiple subunits with at least A(3), B(3), C, D, E, F, H, I and proteolipid K(x).

Its subcellular location is the cell membrane. In terms of biological role, component of the A-type ATP synthase that produces ATP from ADP in the presence of a proton gradient across the membrane. This Thermococcus gammatolerans (strain DSM 15229 / JCM 11827 / EJ3) protein is A-type ATP synthase subunit E.